The primary structure comprises 666 residues: UvrABC system protein B (666 aa).

The Helicase ATP-binding domain maps to 26-183; it reads DSFQKGAEKV…RKLLHIQYNR (158 aa). ATP is bound at residue 39–46; it reads GVTGSGKT. A Beta-hairpin motif is present at residues 92–115; sequence YYDYYQPEAYVPSSDTFIEKDSSI. The 163-residue stretch at 429-591 folds into the Helicase C-terminal domain; the sequence is QIEDLLVEIR…ITPLTIRKEV (163 aa). The UVR domain occupies 625-660; sequence EVLKDKLREEMMKAAKELDFERAAILRDKMLSIQIN.

The protein belongs to the UvrB family. As to quaternary structure, forms a heterotetramer with UvrA during the search for lesions. Interacts with UvrC in an incision complex.

It localises to the cytoplasm. The UvrABC repair system catalyzes the recognition and processing of DNA lesions. A damage recognition complex composed of 2 UvrA and 2 UvrB subunits scans DNA for abnormalities. Upon binding of the UvrA(2)B(2) complex to a putative damaged site, the DNA wraps around one UvrB monomer. DNA wrap is dependent on ATP binding by UvrB and probably causes local melting of the DNA helix, facilitating insertion of UvrB beta-hairpin between the DNA strands. Then UvrB probes one DNA strand for the presence of a lesion. If a lesion is found the UvrA subunits dissociate and the UvrB-DNA preincision complex is formed. This complex is subsequently bound by UvrC and the second UvrB is released. If no lesion is found, the DNA wraps around the other UvrB subunit that will check the other stand for damage. The protein is UvrABC system protein B of Leptospira borgpetersenii serovar Hardjo-bovis (strain JB197).